A 307-amino-acid polypeptide reads, in one-letter code: Methionyl-tRNA formyltransferase (307 aa).

Residue 108 to 111 participates in (6S)-5,6,7,8-tetrahydrofolate binding; it reads SLLP.

The protein belongs to the Fmt family.

It catalyses the reaction L-methionyl-tRNA(fMet) + (6R)-10-formyltetrahydrofolate = N-formyl-L-methionyl-tRNA(fMet) + (6S)-5,6,7,8-tetrahydrofolate + H(+). Its function is as follows. Attaches a formyl group to the free amino group of methionyl-tRNA(fMet). The formyl group appears to play a dual role in the initiator identity of N-formylmethionyl-tRNA by promoting its recognition by IF2 and preventing the misappropriation of this tRNA by the elongation apparatus. In Renibacterium salmoninarum (strain ATCC 33209 / DSM 20767 / JCM 11484 / NBRC 15589 / NCIMB 2235), this protein is Methionyl-tRNA formyltransferase.